The chain runs to 222 residues: Ribonuclease S-3 (222 aa).

A signal peptide spans Met1–Ala22. Cys38 and Cys44 are disulfide-bonded. N-linked (GlcNAc...) asparagine glycosylation occurs at Asn50. His54 (proton donor) is an active-site residue. RNA-binding positions include His54, Gln92–Met93, His109–Glu110, and Arg113–His114. Intrachain disulfides connect Cys68–Cys117, Cys177–Cys210, and Cys193–Cys204. The active site involves Glu110. His114 (proton acceptor) is an active-site residue.

The protein belongs to the RNase T2 family.

It is found in the secreted. Its subcellular location is the extracellular space. The catalysed reaction is a ribonucleotidyl-ribonucleotide-RNA + H2O = a 3'-end 3'-phospho-ribonucleotide-RNA + a 5'-end dephospho-ribonucleoside-RNA + H(+). Self-incompatibility (SI) is the inherited ability of a flowering plant to prevent self-fertilization by discriminating between self and non-self pollen during pollination. In many species, self-incompatibility is controlled by the single, multiallelic locus S. The polypeptide is Ribonuclease S-3 (S3) (Petunia hybrida (Petunia)).